The following is a 365-amino-acid chain: Peptide chain release factor 2 (365 aa).

Gln-252 bears the N5-methylglutamine mark.

The protein belongs to the prokaryotic/mitochondrial release factor family. Post-translationally, methylated by PrmC. Methylation increases the termination efficiency of RF2.

The protein resides in the cytoplasm. Its function is as follows. Peptide chain release factor 2 directs the termination of translation in response to the peptide chain termination codons UGA and UAA. This is Peptide chain release factor 2 from Aeromonas hydrophila subsp. hydrophila (strain ATCC 7966 / DSM 30187 / BCRC 13018 / CCUG 14551 / JCM 1027 / KCTC 2358 / NCIMB 9240 / NCTC 8049).